The following is a 510-amino-acid chain: 2,3-bisphosphoglycerate-independent phosphoglycerate mutase (510 aa).

Mn(2+)-binding residues include Asp-12 and Ser-62. Ser-62 acts as the Phosphoserine intermediate in catalysis. Substrate contacts are provided by residues His-123, 153 to 154, Arg-185, Arg-191, 260 to 263, and Lys-335; these read RD and RPDR. The Mn(2+) site is built by Asp-402, His-406, Asp-443, His-444, and His-461.

This sequence belongs to the BPG-independent phosphoglycerate mutase family. Monomer. Mn(2+) serves as cofactor.

It catalyses the reaction (2R)-2-phosphoglycerate = (2R)-3-phosphoglycerate. The protein operates within carbohydrate degradation; glycolysis; pyruvate from D-glyceraldehyde 3-phosphate: step 3/5. Its function is as follows. Catalyzes the interconversion of 2-phosphoglycerate and 3-phosphoglycerate. The chain is 2,3-bisphosphoglycerate-independent phosphoglycerate mutase from Listeria monocytogenes serotype 4b (strain F2365).